Consider the following 247-residue polypeptide: Sugar fermentation stimulation protein homolog (247 aa).

It belongs to the SfsA family.

In Methanococcoides burtonii (strain DSM 6242 / NBRC 107633 / OCM 468 / ACE-M), this protein is Sugar fermentation stimulation protein homolog.